Here is a 602-residue protein sequence, read N- to C-terminus: Phosphoenolpyruvate carboxykinase [GTP] (602 aa).

Substrate contacts are provided by residues arginine 89 and 211–213 (YAG). Lysine 220 and histidine 239 together coordinate Mn(2+). Serine 260 lines the substrate pocket. 261 to 266 (GSGKTS) lines the GTP pocket. Serine 262 is an active-site residue. Aspartate 277 is a Mn(2+) binding site. 367 to 369 (NAR) is a substrate binding site. 2 residues coordinate GTP: arginine 369 and arginine 400.

The protein belongs to the phosphoenolpyruvate carboxykinase [GTP] family. Requires Mn(2+) as cofactor.

The protein localises to the cytoplasm. The catalysed reaction is oxaloacetate + GTP = phosphoenolpyruvate + GDP + CO2. The protein operates within carbohydrate biosynthesis; gluconeogenesis. Functionally, catalyzes the conversion of oxaloacetate (OAA) to phosphoenolpyruvate (PEP), the rate-limiting step in the metabolic pathway that produces glucose from lactate and other precursors derived from the citric acid cycle. This is Phosphoenolpyruvate carboxykinase [GTP] from Sulfurisphaera tokodaii (strain DSM 16993 / JCM 10545 / NBRC 100140 / 7) (Sulfolobus tokodaii).